The chain runs to 362 residues: Ferredoxin--NADP reductase, leaf isozyme 1, chloroplastic (362 aa).

The N-terminal 62 residues, 1–62 (MAAVTAAAVS…DAAAVAAAPA (62 aa)), are a transit peptide targeting the chloroplast. The FAD-binding FR-type domain occupies 83–205 (KEPYVGKCLL…TGPVGKEMLM (123 aa)). Residues 141–144 (RLYS), 162–164 (CVK), Y168, 179–181 (VCS), and T220 each bind FAD. Residues S144 and K164 each contribute to the NADP(+) site. C180 and C185 are joined by a disulfide. At S181 the chain carries Phosphoserine. Residues T220, 252–253 (VP), 282–283 (SR), K292, 321–322 (GL), and E360 contribute to the NADP(+) site.

This sequence belongs to the ferredoxin--NADP reductase type 1 family. Component of high molecular weight thylakoid LFNRs-containing protein complexes containing LIR1, LFNR1, LFNR2, TIC62 and TROL proteins. Interacts directly with LIR1 and TIC62; LIR1 increases the affinity of LFNR1 and LFNR2 for TIC62. It depends on FAD as a cofactor. Post-translationally, may form interchain disulfide bonds with LIR1.

Its subcellular location is the plastid. It localises to the chloroplast stroma. The protein resides in the chloroplast thylakoid membrane. The enzyme catalyses 2 reduced [2Fe-2S]-[ferredoxin] + NADP(+) + H(+) = 2 oxidized [2Fe-2S]-[ferredoxin] + NADPH. It functions in the pathway energy metabolism; photosynthesis. Its function is as follows. May play a key role in regulating the relative amounts of cyclic and non-cyclic electron flow to meet the demands of the plant for ATP and reducing power. The protein is Ferredoxin--NADP reductase, leaf isozyme 1, chloroplastic of Oryza sativa subsp. japonica (Rice).